A 280-amino-acid chain; its full sequence is MIQTLTDLSALRALVNGWKREGLRVALVPTMGNLHVGHYSLVMLARQYADRVVSSVFVNPTQFGPNEDFACYPRTPEADLRGLEDAGCDALWLPDVDTMYPLGTALATPIHAPGVSDVLEGECRPGHFDGVCTVVARLFNQVQPDVAAFGKKDYQQLAVIRQMVADLAFPIEILGGSIVREADGLAMSSRNQYLSAEERPISANIHKVLLQMRDSYAVGTPRAQVEDAASHALEQAGFRVDYAVVRLPDLSEPGDGHTGAHVALIAARLGSTRLIDNLEF.

31 to 38 is a binding site for ATP; the sequence is MGNLHVGH. Residue histidine 38 is the Proton donor of the active site. Residue glutamine 62 coordinates (R)-pantoate. Glutamine 62 lines the beta-alanine pocket. Position 150-153 (150-153) interacts with ATP; the sequence is GKKD. Position 156 (glutamine 156) interacts with (R)-pantoate. ATP is bound by residues valine 179 and 187–190; that span reads MSSR.

Belongs to the pantothenate synthetase family. As to quaternary structure, homodimer.

It is found in the cytoplasm. It catalyses the reaction (R)-pantoate + beta-alanine + ATP = (R)-pantothenate + AMP + diphosphate + H(+). The protein operates within cofactor biosynthesis; (R)-pantothenate biosynthesis; (R)-pantothenate from (R)-pantoate and beta-alanine: step 1/1. Functionally, catalyzes the condensation of pantoate with beta-alanine in an ATP-dependent reaction via a pantoyl-adenylate intermediate. This Xanthomonas oryzae pv. oryzae (strain KACC10331 / KXO85) protein is Pantothenate synthetase.